The sequence spans 166 residues: MVRKVKRRVSCLPKATYYKPREIPLCDLEIINLSVEELEAIRLCDLLQIAQDEAADQMGISRKTFWNDLQKARQKVADALVNGKAIQISGGDYVNSGVCKVEFLCQKCNHLWETPCNEKRPENCPKCGSESIYRKGGDGRGKRHTERGFCCPKHGDRAVGDQEESV.

This sequence belongs to the UPF0251 family.

The protein is UPF0251 protein UNCMA_27150 of Methanocella arvoryzae (strain DSM 22066 / NBRC 105507 / MRE50).